A 759-amino-acid chain; its full sequence is Pseudocleavage protein nop-1 (759 aa).

5 disordered regions span residues 1–46 (MSAP…SSIF), 334–361 (KIFPGKSESKDRRMSDNNQASEQYMDKK), 379–413 (LSVNDSASKNPKDLTESPQQPKLRKKTASSSNLSQ), 440–495 (QSSR…KKER), and 732–759 (ESDGPASSNDDFDTQSTASTSTVFGAKI). The span at 10 to 42 (DIHSDDRDHADHQTKKEKHWFEEKSEQNGENRR) shows a compositional bias: basic and acidic residues. A compositionally biased stretch (low complexity) spans 448–465 (TGNSSISSGVGSIASGTS). Residues 473-482 (GSRSGQSISR) show a composition bias toward polar residues. Over residues 485–495 (SRRDDEGKKER) the composition is skewed to basic and acidic residues. The segment covering 736 to 759 (PASSNDDFDTQSTASTSTVFGAKI) has biased composition (polar residues).

It is found in the nucleus. The protein localises to the cytoplasm. It localises to the cell cortex. Its subcellular location is the cleavage furrow. Its function is as follows. Required for formation of the pseudocleavage furrow during the first cleavage of the embryo and also mediates aster-induced furrowing during cytokinesis. Promotes cortical recruitment of ani-1 and nmy-2 during pseudocleavage and cytokinesis and promotes the accumulation of actin at furrowing regions. Regulates establishment of embryonic cell polarity. The polypeptide is Pseudocleavage protein nop-1 (nop-1) (Caenorhabditis elegans).